The primary structure comprises 72 residues: Lantibiotic lichenicidin VK21 A2 (72 aa).

The tract at residues 1–21 (MKTMKNSAAREAFKGANHPAG) is disordered. Residues 1-40 (MKTMKNSAAREAFKGANHPAGMVSEEELKALVGGNDVNPE) constitute a propeptide that is removed on maturation. 2-oxobutanoic acid is present on Thr41. A (Z)-2,3-didehydrobutyrine mark is found at Thr42, Thr45, and Thr46. A cross-link (lanthionine (Ser-Cys)) is located at residues 47-51 (SSWTC). 2,3-didehydroalanine (Ser) is present on Ser48. 2 positions are modified to (Z)-2,3-didehydrobutyrine: Thr53 and Thr57. The lanthionine (Ser-Cys) cross-link spans 59–63 (SASLC). 2 cross-links (beta-methyllanthionine (Thr-Cys)) span residues 65-68 (TTKC) and 69-72 (TSRC). Thr66 is modified ((Z)-2,3-didehydrobutyrine).

Maturation of lantibiotics involves the enzymatic conversion of Thr, and Ser into dehydrated AA and the formation of thioether bonds with cysteine. This is followed by membrane translocation and cleavage of the modified precursor. In terms of processing, the 2,3-didehydrobutyrines are determined to be the Z-isomers.

Its subcellular location is the secreted. Functionally, lanthionine-containing peptide antibiotic (lantibiotic) active on Gram-positive bacteria. The bactericidal activity of lantibiotics is based on depolarization of energized bacterial cytoplasmic membranes, initiated by the formation of aqueous transmembrane pores. When present individually, LchA2 exhibits activity towards B.subtilis L1 (IC(50)=30 uM), Rhodococcus sp. SS2 (IC(50)=16.6 uM), M.luteus B1314 (IC(50)=2.6 uM), B.megaterium VKM41 (IC(50)=2 uM), S.aureus 209p (IC(50)=20 uM), B.pumilus 2001, B.globigii I, B.amyloliquefaciens I, M.smegmatis 1171 and M.phlei 1291. However, when combined with LchA1, it displays much stronger activity against B.subtilis L1 (IC(50)=0.64 uM), Rhodococcus sp. SS2 (IC(50)=0.64 uM), M.luteus B1314 (IC(50)=0.09 uM), B.megaterium VKM41 (IC(50)=0.12 uM) and S.aureus 209p (IC(50)=0.64 uM). The activity of the combined LchA1 and LchA2 peptides is strongest at a molar ratio of 1. Even when applied at 17-fold concentration of the highest IC(50) values for Gram-positive bacteria, neither the individual nor the combined peptides display activity against Gram-negative bacteria P.aeruginosa PAO1, P.putida I-97 or E.coli C600. This Bacillus licheniformis protein is Lantibiotic lichenicidin VK21 A2.